A 429-amino-acid chain; its full sequence is Glutamate-1-semialdehyde 2,1-aminomutase 2 (429 aa).

Lysine 268 bears the N6-(pyridoxal phosphate)lysine mark.

The protein belongs to the class-III pyridoxal-phosphate-dependent aminotransferase family. HemL subfamily. As to quaternary structure, homodimer. It depends on pyridoxal 5'-phosphate as a cofactor.

Its subcellular location is the cytoplasm. The enzyme catalyses (S)-4-amino-5-oxopentanoate = 5-aminolevulinate. The protein operates within porphyrin-containing compound metabolism; protoporphyrin-IX biosynthesis; 5-aminolevulinate from L-glutamyl-tRNA(Glu): step 2/2. This is Glutamate-1-semialdehyde 2,1-aminomutase 2 from Geobacillus thermodenitrificans (strain NG80-2).